We begin with the raw amino-acid sequence, 66 residues long: UPF0434 protein M446_0487 (66 aa).

The protein belongs to the UPF0434 family.

In Methylobacterium sp. (strain 4-46), this protein is UPF0434 protein M446_0487.